The sequence spans 166 residues: Phosphopantetheine adenylyltransferase (166 aa).

Residue Ser-9 participates in substrate binding. ATP contacts are provided by residues 9-10 and His-17; that span reads SF. Substrate-binding residues include Lys-41, Leu-74, and Lys-88. Residues 89 to 91, Glu-99, and 123 to 129 contribute to the ATP site; these read GLR and YVHLSST.

The protein belongs to the bacterial CoaD family. Homohexamer. Mg(2+) serves as cofactor.

The protein resides in the cytoplasm. It catalyses the reaction (R)-4'-phosphopantetheine + ATP + H(+) = 3'-dephospho-CoA + diphosphate. The protein operates within cofactor biosynthesis; coenzyme A biosynthesis; CoA from (R)-pantothenate: step 4/5. Functionally, reversibly transfers an adenylyl group from ATP to 4'-phosphopantetheine, yielding dephospho-CoA (dPCoA) and pyrophosphate. This chain is Phosphopantetheine adenylyltransferase, found in Paenarthrobacter aurescens (strain TC1).